The primary structure comprises 201 residues: Small ribosomal subunit protein uS4 (201 aa).

A disordered region spans residues 21 to 43 (GTGKELNRRPYAPGDHGQGRRQK). The S4 RNA-binding domain occupies 93–153 (RRLDNMVYRL…EKSKDMAIIK (61 aa)).

The protein belongs to the universal ribosomal protein uS4 family. As to quaternary structure, part of the 30S ribosomal subunit. Contacts protein S5. The interaction surface between S4 and S5 is involved in control of translational fidelity.

One of the primary rRNA binding proteins, it binds directly to 16S rRNA where it nucleates assembly of the body of the 30S subunit. Its function is as follows. With S5 and S12 plays an important role in translational accuracy. The chain is Small ribosomal subunit protein uS4 from Levilactobacillus brevis (strain ATCC 367 / BCRC 12310 / CIP 105137 / JCM 1170 / LMG 11437 / NCIMB 947 / NCTC 947) (Lactobacillus brevis).